Consider the following 302-residue polypeptide: Ethylmalonyl-CoA decarboxylase (302 aa).

The protein belongs to the enoyl-CoA hydratase/isomerase family.

The protein localises to the cytoplasm. Its subcellular location is the cytosol. It catalyses the reaction (2S)-ethylmalonyl-CoA + H(+) = butanoyl-CoA + CO2. The catalysed reaction is (S)-methylmalonyl-CoA + H(+) = propanoyl-CoA + CO2. It carries out the reaction (2R)-ethylmalonyl-CoA + H(+) = butanoyl-CoA + CO2. Decarboxylates ethylmalonyl-CoA, a potentially toxic metabolite, to form butyryl-CoA, suggesting it might be involved in metabolite proofreading. Acts preferentially on (S)-ethylmalonyl-CoA but also has some activity on the (R)-isomer. Also has methylmalonyl-CoA decarboxylase activity at lower level. The protein is Ethylmalonyl-CoA decarboxylase (echdc1) of Danio rerio (Zebrafish).